Reading from the N-terminus, the 206-residue chain is Proteasome subunit beta 1 (206 aa).

The propeptide at 1-5 is removed in mature form; by autocatalysis; that stretch reads MLMKG. Thr-6 functions as the Nucleophile in the catalytic mechanism.

Belongs to the peptidase T1B family. In terms of assembly, the 20S proteasome core is composed of 14 alpha and 14 beta subunits that assemble into four stacked heptameric rings, resulting in a barrel-shaped structure. The two inner rings, each composed of seven catalytic beta subunits, are sandwiched by two outer rings, each composed of seven alpha subunits. The catalytic chamber with the active sites is on the inside of the barrel. Has a gated structure, the ends of the cylinder being occluded by the N-termini of the alpha-subunits. Is capped at one or both ends by the proteasome regulatory ATPase, PAN.

It localises to the cytoplasm. It carries out the reaction Cleavage of peptide bonds with very broad specificity.. The formation of the proteasomal ATPase PAN-20S proteasome complex, via the docking of the C-termini of PAN into the intersubunit pockets in the alpha-rings, triggers opening of the gate for substrate entry. Interconversion between the open-gate and close-gate conformations leads to a dynamic regulation of the 20S proteasome proteolysis activity. Its function is as follows. Component of the proteasome core, a large protease complex with broad specificity involved in protein degradation. In Korarchaeum cryptofilum (strain OPF8), this protein is Proteasome subunit beta 1.